Here is a 198-residue protein sequence, read N- to C-terminus: Outer-membrane lipoprotein carrier protein (198 aa).

An N-terminal signal peptide occupies residues 1–17 (MKKFLFSLCLLSSTVLA).

This sequence belongs to the LolA family. Monomer.

The protein localises to the periplasm. Participates in the translocation of lipoproteins from the inner membrane to the outer membrane. Only forms a complex with a lipoprotein if the residue after the N-terminal Cys is not an aspartate (The Asp acts as a targeting signal to indicate that the lipoprotein should stay in the inner membrane). This Aliivibrio fischeri (strain MJ11) (Vibrio fischeri) protein is Outer-membrane lipoprotein carrier protein.